The primary structure comprises 444 residues: Vacuolar protein sorting-associated protein 4B (444 aa).

The region spanning 4–82 (TSPNLQKAID…KEYLKNKEKK (79 aa)) is the MIT domain. Residues 19-82 (AQEDKAGNYE…KEYLKNKEKK (64 aa)) adopt a coiled-coil conformation. Positions 78 to 88 (NKEKKAQKPVK) are enriched in basic and acidic residues. Residues 78–117 (NKEKKAQKPVKEGQPSPADEKGNDSDGEGESDDPEKKKLQ) are disordered. Phosphoserine occurs at positions 93, 102, and 108. 174–181 (GPPGTGKS) serves as a coordination point for ATP. Ser-410 carries the phosphoserine modification.

This sequence belongs to the AAA ATPase family. As to quaternary structure, proposed to be monomeric or homodimeric in nucleotide-free form and to oligomerize upon binding to ATP to form two stacked hexameric or heptameric rings with a central pore through which ESCRT-III substrates are translocated in an ATP-dependent manner. In vitro, associates on the inside of a helical tubular structure formed by a CHMP2A-CHMP3 polymer. Interacts with CHMP1A, CHMP1B, CHMP2A, CHMP4B and CHMP6. Interacts with VPS4A; the interaction suggests a heteromeric assembly with VPS4A. Interacts with VTA1.

It is found in the late endosome membrane. The enzyme catalyses ATP + H2O = ADP + phosphate + H(+). In terms of biological role, involved in late steps of the endosomal multivesicular bodies (MVB) pathway. Recognizes membrane-associated ESCRT-III assemblies and catalyzes their disassembly, possibly in combination with membrane fission. Redistributes the ESCRT-III components to the cytoplasm for further rounds of MVB sorting. MVBs contain intraluminal vesicles (ILVs) that are generated by invagination and scission from the limiting membrane of the endosome and mostly are delivered to lysosomes enabling degradation of membrane proteins, such as stimulated growth factor receptors, lysosomal enzymes and lipids. VPS4A/B are required for the exosomal release of SDCBP, CD63 and syndecan. Its function is as follows. (Microbial infection) In conjunction with the ESCRT machinery also appears to function in topologically equivalent membrane fission events, such as the terminal stages of cytokinesis and enveloped virus budding (lentiviruses). The chain is Vacuolar protein sorting-associated protein 4B (VPS4B) from Pongo abelii (Sumatran orangutan).